The sequence spans 182 residues: uncharacterized protein (182 aa).

2 disordered regions span residues 17 to 53 (AVSQAQGRPGHPDAPPNIYEGGLGSPQPQCPSAQGSK) and 128 to 159 (DSLGSSASSSSMDPDKGALPQPSPSRLRPKRS). The span at 42 to 53 (PQPQCPSAQGSK) shows a compositional bias: polar residues. Residues 129–138 (SLGSSASSSS) are compositionally biased toward low complexity.

This is an uncharacterized protein from Homo sapiens (Human).